We begin with the raw amino-acid sequence, 269 residues long: Shikimate dehydrogenase (NADP(+)) (269 aa).

Residues 22-24 and threonine 68 contribute to the shikimate site; that span reads TLS. The active-site Proton acceptor is the lysine 72. Residues asparagine 93 and aspartate 104 each contribute to the shikimate site. Residues 128 to 132, 152 to 157, and phenylalanine 210 contribute to the NADP(+) site; these read GAGGA and NRTKSR. Position 212 (tyrosine 212) interacts with shikimate. Glycine 233 provides a ligand contact to NADP(+).

Belongs to the shikimate dehydrogenase family. In terms of assembly, homodimer.

It catalyses the reaction shikimate + NADP(+) = 3-dehydroshikimate + NADPH + H(+). It functions in the pathway metabolic intermediate biosynthesis; chorismate biosynthesis; chorismate from D-erythrose 4-phosphate and phosphoenolpyruvate: step 4/7. Its function is as follows. Involved in the biosynthesis of the chorismate, which leads to the biosynthesis of aromatic amino acids. Catalyzes the reversible NADPH linked reduction of 3-dehydroshikimate (DHSA) to yield shikimate (SA). The sequence is that of Shikimate dehydrogenase (NADP(+)) from Saccharolobus solfataricus (strain ATCC 35092 / DSM 1617 / JCM 11322 / P2) (Sulfolobus solfataricus).